A 699-amino-acid chain; its full sequence is 1,4-alpha-glucan-branching enzyme (699 aa).

Residues 59-60 (NE) and 88-90 (WAP) contribute to the substrate site. Trp-104 is a (1,4-alpha-D-glucosyl)n binding site. 115–118 (DYGK) provides a ligand contact to substrate. Lys-140 is a binding site for (1,4-alpha-D-glucosyl)n. Tyr-170 carries the post-translational modification Phosphotyrosine. Residue 330 to 333 (EVLR) participates in substrate binding. Asp-354 acts as the Nucleophile in catalysis. Glu-409 serves as the catalytic Proton donor.

Belongs to the glycosyl hydrolase 13 family. GlgB subfamily. As to quaternary structure, monomer.

The enzyme catalyses Transfers a segment of a (1-&gt;4)-alpha-D-glucan chain to a primary hydroxy group in a similar glucan chain.. It participates in glycan biosynthesis; glycogen biosynthesis. Functionally, glycogen-branching enzyme participates in the glycogen biosynthetic process along with glycogenin and glycogen synthase. Generates alpha-1,6-glucosidic branches from alpha-1,4-linked glucose chains, to increase solubility of the glycogen polymer. In Equus caballus (Horse), this protein is 1,4-alpha-glucan-branching enzyme (GBE1).